The primary structure comprises 55 residues: Large ribosomal subunit protein bL33 (55 aa).

Belongs to the bacterial ribosomal protein bL33 family.

In Ruegeria sp. (strain TM1040) (Silicibacter sp.), this protein is Large ribosomal subunit protein bL33.